The following is a 636-amino-acid chain: MENKWFLSMVRDDFKGGKINLEKAQKLLEKLDIQCNTIHVKCIFKDNDRLKQGRITIEEFRTIYRIIAHREEIIEIFNAYPENRKILFERNLIDFLTQEQYSLDINRSIVYEIIQKYEPIEEVKQAHQMSFEGFTRDMGSSECLLFNNECGSVYQDMTHPLSDYFISSSHNTYLISDQIMGPSNLWGYVSALVKGCRCLEIDCWDGSQNEPVVYHGYTLTSKLLFKTVIQAIHKYAFITSDYPVVLSLENHCSLSQQEVMADNLQSVFGDALLSDVLDDCPDRLPSPEALKFKILVRNKKIGTLKETHERKGFDKHGQVQECEEEEEAEQEEEENEVRDSEILDILQDDLEKEELKRGVGIKFFKKKKVKIATALSDLVIYTKVEKFRSFHYSRLYQQFNETNSIGETQARKLSKLRASEFILHTRKFITRIYPKATRADSSNFNPQEFWNIGCQMVALNFQTPGLPMDLQNGKFLENGNSGYILKPHFLRDGKSIFNPNKAPINSNPITLTIRLISGIQLPPSYHSSSNKADTLVIIEIFGVPNDQMKQQTRVIKKNAFSPRWNETFTFIIQVPELALIRFVVENQGLITGNEFLGQYTLPVLCMNKGYRRVPLFSKMGESLEPASLFIYVWYIR.

Residues 35–70 (CNTIHVKCIFKDNDRLKQGRITIEEFRTIYRIIAHR) enclose the EF-hand domain. Residues 155–299 (QDMTHPLSDY…LKFKILVRNK (145 aa)) form the PI-PLC X-box domain. Residues histidine 170 and histidine 215 contribute to the active site. A disordered region spans residues 311–338 (KGFDKHGQVQECEEEEEAEQEEEENEVR). Positions 318 to 345 (QVQECEEEEEAEQEEEENEVRDSEILDI) form a coiled coil. The span at 321 to 336 (ECEEEEEAEQEEEENE) shows a compositional bias: acidic residues. Residues 375 to 491 (LSDLVIYTKV…GYILKPHFLR (117 aa)) enclose the PI-PLC Y-box domain. The C2 domain maps to 491–617 (RDGKSIFNPN…KGYRRVPLFS (127 aa)).

Interacts via its C2 domain with PtdIns(3)P and, to a lesser extent, PtdIns(5)P in vitro. Ca(2+) is required as a cofactor. Expressed specifically in testis.

It localises to the nucleus. It is found in the cytoplasm. Its subcellular location is the perinuclear region. It carries out the reaction a 1,2-diacyl-sn-glycero-3-phospho-(1D-myo-inositol-4,5-bisphosphate) + H2O = 1D-myo-inositol 1,4,5-trisphosphate + a 1,2-diacyl-sn-glycerol + H(+). Functionally, the production of the second messenger molecules diacylglycerol (DAG) and inositol 1,4,5-trisphosphate (IP3) is mediated by activated phosphatidylinositol-specific phospholipase C enzymes. In vitro, hydrolyzes PtdIns(4,5)P2 in a Ca(2+)-dependent manner. Triggers intracellular Ca(2+) oscillations in oocytes solely during M phase and is involved in inducing oocyte activation and initiating embryonic development up to the blastocyst stage. Is therefore a strong candidate for the egg-activating soluble sperm factor that is transferred from the sperm into the egg cytoplasm following gamete membrane fusion. May exert an inhibitory effect on phospholipase-C-coupled processes that depend on calcium ions and protein kinase C, including CFTR trafficking and function. In Sus scrofa (Pig), this protein is 1-phosphatidylinositol 4,5-bisphosphate phosphodiesterase zeta-1.